Here is a 591-residue protein sequence, read N- to C-terminus: Parathyroid hormone/parathyroid hormone-related peptide receptor (591 aa).

Positions M1–V26 are cleaved as a signal peptide. The Extracellular portion of the chain corresponds to D27–G188. 3 disulfides stabilise this stretch: C48–C117, C108–C148, and C131–C170. The tract at residues K67–R104 is disordered. Positions E81–D96 are enriched in basic and acidic residues. 4 N-linked (GlcNAc...) asparagine glycosylation sites follow: N151, N161, N166, and N176. Residues M189–F212 traverse the membrane as a helical segment. Residues R213–R219 lie on the Cytoplasmic side of the membrane. The helical transmembrane segment at N220–V239 threads the bilayer. Topologically, residues K240–R282 are extracellular. A helical membrane pass occupies residues V283–L306. Topologically, residues H307–Y320 are cytoplasmic. A helical transmembrane segment spans residues L321 to V342. Over R343–W361 the chain is Extracellular. The chain crosses the membrane as a helical span at residues I362–I382. At R383–S409 the chain is on the cytoplasmic side. The helical transmembrane segment at T410–P428 threads the bilayer. At Y429–Q440 the chain is on the extracellular side. The chain crosses the membrane as a helical span at residues M441–N463. Residues G464–M591 lie on the Cytoplasmic side of the membrane. The Important for interaction with G proteins signature appears at W474 to W477.

Belongs to the G-protein coupled receptor 2 family. In terms of assembly, homodimer in the absence of bound ligand. Peptide hormone binding leads to dissociation of the homodimer. N-glycosylated. As to expression, detected in kidney.

It localises to the cell membrane. In terms of biological role, G-protein-coupled receptor for parathyroid hormone (PTH) and for parathyroid hormone-related peptide (PTHLH). Ligand binding causes a conformation change that triggers signaling via guanine nucleotide-binding proteins (G proteins) and modulates the activity of downstream effectors, such as adenylate cyclase (cAMP). PTH1R is coupled to G(s) G alpha proteins and mediates activation of adenylate cyclase activity. PTHLH dissociates from PTH1R more rapidly than PTH; as consequence, the cAMP response induced by PTHLH decays faster than the response induced by PTH. This chain is Parathyroid hormone/parathyroid hormone-related peptide receptor (Pth1r), found in Mus musculus (Mouse).